Consider the following 533-residue polypeptide: Metallothionein expression activator (533 aa).

C2H2-type zinc fingers lie at residues 443–472 and 473–500; these read YVCL…SDRP and YRCD…NGRP. The segment at 501-524 adopts a C2H2-type 3; atypical zinc-finger fold; that stretch reads YVCECLKRFNRLDALNRHKQRNIC.

It is found in the nucleus. Its function is as follows. Regulates the transcription of genes required for cell separation. This is Metallothionein expression activator (ace2) from Schizosaccharomyces pombe (strain 972 / ATCC 24843) (Fission yeast).